The sequence spans 460 residues: CCA-adding enzyme (460 aa).

ATP contacts are provided by Ser50 and Arg53. 2 residues coordinate CTP: Ser50 and Arg53. Residues Asp62, Asp64, and Asp117 each coordinate Mg(2+). Residues His140, Lys159, and Tyr168 each contribute to the ATP site. The CTP site is built by His140, Lys159, and Tyr168.

This sequence belongs to the tRNA nucleotidyltransferase/poly(A) polymerase family. Archaeal CCA-adding enzyme subfamily. In terms of assembly, homodimer. Mg(2+) serves as cofactor.

It catalyses the reaction a tRNA precursor + 2 CTP + ATP = a tRNA with a 3' CCA end + 3 diphosphate. The catalysed reaction is a tRNA with a 3' CCA end + 2 CTP + ATP = a tRNA with a 3' CCACCA end + 3 diphosphate. In terms of biological role, catalyzes the addition and repair of the essential 3'-terminal CCA sequence in tRNAs without using a nucleic acid template. Adds these three nucleotides in the order of C, C, and A to the tRNA nucleotide-73, using CTP and ATP as substrates and producing inorganic pyrophosphate. tRNA 3'-terminal CCA addition is required both for tRNA processing and repair. Also involved in tRNA surveillance by mediating tandem CCA addition to generate a CCACCA at the 3' terminus of unstable tRNAs. While stable tRNAs receive only 3'-terminal CCA, unstable tRNAs are marked with CCACCA and rapidly degraded. This chain is CCA-adding enzyme, found in Methanoregula boonei (strain DSM 21154 / JCM 14090 / 6A8).